Reading from the N-terminus, the 245-residue chain is 2,3,4,5-tetrahydropyridine-2,6-dicarboxylate N-acetyltransferase (245 aa).

It belongs to the transferase hexapeptide repeat family. DapH subfamily.

It catalyses the reaction (S)-2,3,4,5-tetrahydrodipicolinate + acetyl-CoA + H2O = L-2-acetamido-6-oxoheptanedioate + CoA. It functions in the pathway amino-acid biosynthesis; L-lysine biosynthesis via DAP pathway; LL-2,6-diaminopimelate from (S)-tetrahydrodipicolinate (acetylase route): step 1/3. Catalyzes the transfer of an acetyl group from acetyl-CoA to tetrahydrodipicolinate. The polypeptide is 2,3,4,5-tetrahydropyridine-2,6-dicarboxylate N-acetyltransferase (Methanopyrus kandleri (strain AV19 / DSM 6324 / JCM 9639 / NBRC 100938)).